We begin with the raw amino-acid sequence, 98 residues long: Small ribosomal subunit protein bS6 (98 aa).

Belongs to the bacterial ribosomal protein bS6 family.

Its function is as follows. Binds together with bS18 to 16S ribosomal RNA. This chain is Small ribosomal subunit protein bS6, found in Staphylococcus haemolyticus (strain JCSC1435).